Here is a 733-residue protein sequence, read N- to C-terminus: Polyribonucleotide nucleotidyltransferase (733 aa).

2 residues coordinate Mg(2+): D488 and D494. Residues 555–614 (PRIEVMNIAVDKIRDVIGTGGKVIREIVEQTGAKINIEDDGTIRIASADAKTIEAAKRWI) form the KH domain. In terms of domain architecture, S1 motif spans 624–692 (GVIYQGTVVK…ERGKVRLSMK (69 aa)). Residues 711-722 (EQEKYTEETHKS) are compositionally biased toward basic and acidic residues. A disordered region spans residues 711-733 (EQEKYTEETHKSENKRRRKKKEE). The segment covering 723–733 (ENKRRRKKKEE) has biased composition (basic residues).

It belongs to the polyribonucleotide nucleotidyltransferase family. Mg(2+) serves as cofactor.

It is found in the cytoplasm. The enzyme catalyses RNA(n+1) + phosphate = RNA(n) + a ribonucleoside 5'-diphosphate. Its function is as follows. Involved in mRNA degradation. Catalyzes the phosphorolysis of single-stranded polyribonucleotides processively in the 3'- to 5'-direction. The sequence is that of Polyribonucleotide nucleotidyltransferase from Bartonella henselae (strain ATCC 49882 / DSM 28221 / CCUG 30454 / Houston 1) (Rochalimaea henselae).